Here is a 213-residue protein sequence, read N- to C-terminus: UPF0111 protein TM_0914 (213 aa).

Belongs to the UPF0111 family.

This chain is UPF0111 protein TM_0914, found in Thermotoga maritima (strain ATCC 43589 / DSM 3109 / JCM 10099 / NBRC 100826 / MSB8).